The primary structure comprises 1231 residues: Fanconi anemia group J protein homolog (1231 aa).

The 438-residue stretch at 11–448 (GGVKILFPCR…SDHEPLRAVC (438 aa)) folds into the Helicase ATP-binding domain. Residue 46-53 (SPTGSGKS) coordinates ATP. Disordered regions lie at residues 104–126 (TFSS…GASS) and 147–166 (QDDD…DEQL). The segment covering 152–166 (QTDRKRIRQSHDEQL) has biased composition (basic and acidic residues). Residues 155–173 (RKRIRQSHDEQLQARKRRC) carry the Nuclear localization signal motif. [4Fe-4S] cluster is bound by residues C291, C304, C316, and C356. The short motif at 399–402 (DEAH) is the DEAH box element. Residues 890 to 903 (SKNQQQRMQMSSTN) show a composition bias toward polar residues. Disordered regions lie at residues 890 to 924 (SKNQ…PTSS), 936 to 956 (VSEF…PPEI), and 1195 to 1231 (GNEN…FFLD). Low complexity-rich tracts occupy residues 909 to 924 (SQGT…PTSS) and 940 to 954 (TQPT…TSPP). A compositionally biased stretch (basic and acidic residues) spans 1206–1217 (KGTEQKNRENRL).

It belongs to the DEAD box helicase family. DEAH subfamily. [4Fe-4S] cluster serves as cofactor.

The protein resides in the nucleus. It carries out the reaction Couples ATP hydrolysis with the unwinding of duplex DNA at the replication fork by translocating in the 5'-3' direction. This creates two antiparallel DNA single strands (ssDNA). The leading ssDNA polymer is the template for DNA polymerase III holoenzyme which synthesizes a continuous strand.. It catalyses the reaction ATP + H2O = ADP + phosphate + H(+). Functionally, DNA-dependent helicase and 5' to 3' DNA helicase required for the maintenance of chromosomal stability. Involved in the repair of DNA double-strand breaks by homologous recombination. Involved in the repair of abasic sites at replication forks by promoting the degradation of DNA-protein cross-links: acts by catalyzing unfolding of HMCES DNA-protein cross-link via its helicase activity, exposing the underlying DNA and enabling cleavage of the DNA-protein adduct by the SPRTN metalloprotease. The polypeptide is Fanconi anemia group J protein homolog (brip1.L) (Xenopus laevis (African clawed frog)).